Here is a 203-residue protein sequence, read N- to C-terminus: MPKVGMEPVRRKALVDAALRVIGDQGTLAVTMSEIARTAGVSPALAHHYFGSKEQLLIATIRSLLGKLRDDAVAAMKAAATPRERVSALIRVSFRADQFAPETVAAWLAFYSEAQRSEEVRRLLVIYARRLRSNLLVGLRALCPADDAERIAEGAAAMIDGLYIRQSLKSAPISIEASVALTEDYVNAHLRANGDGKYPSPRV.

The region spanning 8–68 (PVRRKALVDA…ATIRSLLGKL (61 aa)) is the HTH tetR-type domain. Positions 31–50 (TMSEIARTAGVSPALAHHYF) form a DNA-binding region, H-T-H motif.

The protein operates within amine and polyamine biosynthesis; betaine biosynthesis via choline pathway [regulation]. Repressor involved in the biosynthesis of the osmoprotectant glycine betaine. It represses transcription of the choline transporter BetT and the genes of BetAB involved in the synthesis of glycine betaine. This Rhizobium meliloti (strain 1021) (Ensifer meliloti) protein is HTH-type transcriptional regulator BetI.